The sequence spans 227 residues: Max dimerization protein 1 (227 aa).

Residues 21–48 (RREREAEHGYASMLPYSKDRDAFKRRNK) carry the Nuclear localization signal motif. Disordered stretches follow at residues 30-66 (YASM…MEKN), 142-161 (MDSV…REEL), and 184-227 (GWSS…GLGL). In terms of domain architecture, bHLH spans 55–107 (SSRSTHNEMEKNRRAHLRLCLEKLKGLVPLGPESSRHTTLSLLTKAKLHIKKL). A compositionally biased stretch (polar residues) spans 198–211 (MQSLGSDEGYSSAT). A compositionally biased stretch (basic and acidic residues) spans 216–227 (KLQDGHKAGLGL).

Heterodimer with MAX; the interaction is required for DNA-binding. DNA binding requires dimerization with another bHLH protein; does not form homodimers, and does not bind to DNA in the absence of MAX in vitro. Interacts with RNF17. Ubiquitinated by BIRC2/c-IAP1, leading to its subsequent degradation by the proteasome.

It localises to the nucleus. Functionally, component of a transcriptional repressor complex together with MAX. In complex with MAX binds to the core DNA sequence 5'-CAC[GA]TG-3'. Antagonizes MYC transcriptional activity by competing with MYC for MAX binding. Binds to the TERT promoter and represses telomerase expression, possibly by interfering with MYC binding. In Mus musculus (Mouse), this protein is Max dimerization protein 1 (Mxd1).